Here is a 393-residue protein sequence, read N- to C-terminus: Isocitrate dehydrogenase [NADP] (393 aa).

S102, N104, R108, R118, and R142 together coordinate D-threo-isocitrate. Residue D283 participates in Mg(2+) binding.

The protein belongs to the isocitrate and isopropylmalate dehydrogenases family. In terms of assembly, homodimer. Mg(2+) is required as a cofactor. The cofactor is Mn(2+).

The catalysed reaction is D-threo-isocitrate + NADP(+) = 2-oxoglutarate + CO2 + NADPH. Catalyzes the oxidative decarboxylation of isocitrate to 2-oxoglutarate and carbon dioxide with the concomitant reduction of NADP(+). This Streptococcus mutans serotype c (strain ATCC 700610 / UA159) protein is Isocitrate dehydrogenase [NADP] (icd).